The chain runs to 156 residues: Small ribosomal subunit protein uS7 (156 aa).

The protein belongs to the universal ribosomal protein uS7 family. In terms of assembly, part of the 30S ribosomal subunit. Contacts proteins S9 and S11.

One of the primary rRNA binding proteins, it binds directly to 16S rRNA where it nucleates assembly of the head domain of the 30S subunit. Is located at the subunit interface close to the decoding center, probably blocks exit of the E-site tRNA. The protein is Small ribosomal subunit protein uS7 of Vibrio atlanticus (strain LGP32) (Vibrio splendidus (strain Mel32)).